The primary structure comprises 380 residues: uncharacterized protein (380 aa).

This is an uncharacterized protein from Sinorhizobium fredii (strain NBRC 101917 / NGR234).